We begin with the raw amino-acid sequence, 161 residues long: Protein-export protein SecB (161 aa).

The protein belongs to the SecB family. As to quaternary structure, homotetramer, a dimer of dimers. One homotetramer interacts with 1 SecA dimer.

The protein localises to the cytoplasm. One of the proteins required for the normal export of preproteins out of the cell cytoplasm. It is a molecular chaperone that binds to a subset of precursor proteins, maintaining them in a translocation-competent state. It also specifically binds to its receptor SecA. This is Protein-export protein SecB from Shewanella putrefaciens (strain CN-32 / ATCC BAA-453).